Reading from the N-terminus, the 160-residue chain is Ribosomal RNA large subunit methyltransferase H (160 aa).

Residues 44 to 63 (LPESRASNSATRKREEAVQI) form a disordered region. S-adenosyl-L-methionine contacts are provided by residues leucine 76, glycine 108, and 127–132 (LGKMTW).

The protein belongs to the RNA methyltransferase RlmH family. In terms of assembly, homodimer.

Its subcellular location is the cytoplasm. It catalyses the reaction pseudouridine(1915) in 23S rRNA + S-adenosyl-L-methionine = N(3)-methylpseudouridine(1915) in 23S rRNA + S-adenosyl-L-homocysteine + H(+). Specifically methylates the pseudouridine at position 1915 (m3Psi1915) in 23S rRNA. The polypeptide is Ribosomal RNA large subunit methyltransferase H (Allorhizobium ampelinum (strain ATCC BAA-846 / DSM 112012 / S4) (Agrobacterium vitis (strain S4))).